A 405-amino-acid polypeptide reads, in one-letter code: S-adenosylmethionine synthase (405 aa).

Position 141 to 146 (141 to 146 (GQGSVD)) interacts with ATP.

The protein belongs to the AdoMet synthase 2 family. Requires Mg(2+) as cofactor.

It carries out the reaction L-methionine + ATP + H2O = S-adenosyl-L-methionine + phosphate + diphosphate. The protein operates within amino-acid biosynthesis; S-adenosyl-L-methionine biosynthesis; S-adenosyl-L-methionine from L-methionine: step 1/1. Catalyzes the formation of S-adenosylmethionine from methionine and ATP. This chain is S-adenosylmethionine synthase, found in Methanococcus maripaludis (strain C5 / ATCC BAA-1333).